The following is a 276-amino-acid chain: Undecaprenyl-diphosphatase 1 (276 aa).

6 helical membrane-spanning segments follow: residues 43–63, 85–105, 109–129, 184–204, 214–234, and 254–274; these read RAMAFNIIIQLGAILAVVWEF, ANLLIAFLPAVVLGVIFADLI, LFNPITVAAALVVGGIVMLWA, ATEFSFFLAMPTMVGAAVYSG, ADFPVFAIGFVTAFIFAMIAV, and IVFGLVILATWQFGWVDWTAA.

Belongs to the UppP family.

It is found in the cell inner membrane. The enzyme catalyses di-trans,octa-cis-undecaprenyl diphosphate + H2O = di-trans,octa-cis-undecaprenyl phosphate + phosphate + H(+). Functionally, catalyzes the dephosphorylation of undecaprenyl diphosphate (UPP). Confers resistance to bacitracin. This is Undecaprenyl-diphosphatase 1 from Pseudomonas fluorescens (strain Pf0-1).